The sequence spans 150 residues: Large ribosomal subunit protein bL9 (150 aa).

Belongs to the bacterial ribosomal protein bL9 family.

Functionally, binds to the 23S rRNA. The chain is Large ribosomal subunit protein bL9 from Burkholderia mallei (strain NCTC 10247).